A 200-amino-acid polypeptide reads, in one-letter code: Cytochrome c biogenesis ATP-binding export protein CcmA (200 aa).

An ABC transporter domain is found at 3-200 (LSGRGLRCVR…AREMRIGAAA (198 aa)). Residue 35–42 (GHNGAGKT) coordinates ATP.

Belongs to the ABC transporter superfamily. CcmA exporter (TC 3.A.1.107) family. As to quaternary structure, the complex is composed of two ATP-binding proteins (CcmA) and two transmembrane proteins (CcmB).

It is found in the cell inner membrane. The catalysed reaction is heme b(in) + ATP + H2O = heme b(out) + ADP + phosphate + H(+). Part of the ABC transporter complex CcmAB involved in the biogenesis of c-type cytochromes; once thought to export heme, this seems not to be the case, but its exact role is uncertain. Responsible for energy coupling to the transport system. In Rhodopseudomonas palustris (strain BisB5), this protein is Cytochrome c biogenesis ATP-binding export protein CcmA.